The sequence spans 129 residues: MGVPMGKSLLAPLTFLALASCCFAAYRPSETLCGGELVDTLQFVCGDRGFYFSRPASRVSRRSSRGIVEECCFRSCDLALLETYCATPAKSERDVSTPPTVLPDNFPRYPVGKFFQYDTWKQSAQRLRR.

Positions 1–24 (MGVPMGKSLLAPLTFLALASCCFA) are cleaved as a signal peptide. The interval 25–52 (AYRPSETLCGGELVDTLQFVCGDRGFYF) is b. 3 cysteine pairs are disulfide-bonded: cysteine 33-cysteine 72, cysteine 45-cysteine 85, and cysteine 71-cysteine 76. The tract at residues 53 to 65 (SRPASRVSRRSSR) is c. Residues 66–86 (GIVEECCFRSCDLALLETYCA) are a. Positions 87–92 (TPAKSE) are d. Positions 93-129 (RDVSTPPTVLPDNFPRYPVGKFFQYDTWKQSAQRLRR) are cleaved as a propeptide — e peptide.

The protein belongs to the insulin family. Interacts with MYORG; this interaction is required for IGF2 secretion. Interacts with integrins ITGAV:ITGB3 and ITGA6:ITGB4; integrin-binding is required for IGF2 signaling. Proteolytically processed by PCSK4, proIGF2 is cleaved at Arg-129 and Arg-92 to generate big-IGF2 and mature IGF2.

Its subcellular location is the secreted. Functionally, the insulin-like growth factors possess growth-promoting activity. Major fetal growth hormone in mammals. Plays a key role in regulating fetoplacental development. IGF2 is influenced by placental lactogen. Also involved in tissue differentiation. In adults, involved in glucose metabolism in adipose tissue, skeletal muscle and liver. Acts as a ligand for integrin which is required for IGF2 signaling. Positively regulates myogenic transcription factor MYOD1 function by facilitating the recruitment of transcriptional coactivators, thereby controlling muscle terminal differentiation. Inhibits myoblast differentiation and modulates metabolism via increasing the mitochondrial respiration rate. Its function is as follows. Preptin undergoes glucose-mediated co-secretion with insulin, and acts as a physiological amplifier of glucose-mediated insulin secretion. Exhibits osteogenic properties by increasing osteoblast mitogenic activity through phosphoactivation of MAPK1 and MAPK3. The polypeptide is Insulin-like growth factor 2 (Neovison vison (American mink)).